The primary structure comprises 273 residues: SUMO-1 cysteine protease S273R (273 aa).

Residues histidine 168 and asparagine 187 contribute to the active site. Residue glutamine 226 participates in substrate binding. The active-site Nucleophile is cysteine 232.

It belongs to the peptidase C63 family.

It is found in the host cytoplasm. It localises to the virion. Its function is as follows. Cysteine protease that plays several role during infection including processing of the structural polyprotein or inhibition of the host immune response. Catalyzes the maturation of the pp220 and pp62 polyprotein precursors into core-shell proteins. Plays a role in the disruption of host pyroptosis via specific cleavage of gasdermin D/GSDMD. In addition, strongly decreases the host cGAS-STING signaling by targeting IKBKE via its enzymatic activity. Also impairs host FOXJ1-mediated antiviral effect via degradation of FOXJ1. In Ornithodoros (relapsing fever ticks), this protein is SUMO-1 cysteine protease S273R.